We begin with the raw amino-acid sequence, 304 residues long: Aspartate carbamoyltransferase catalytic subunit (304 aa).

The carbamoyl phosphate site is built by Arg-54 and Thr-55. Lys-83 contributes to the L-aspartate binding site. Carbamoyl phosphate is bound by residues Arg-104, His-132, and Gln-135. Residues Arg-165 and Arg-226 each coordinate L-aspartate. Residues Leu-265 and Pro-266 each coordinate carbamoyl phosphate.

Belongs to the aspartate/ornithine carbamoyltransferase superfamily. ATCase family. In terms of assembly, heterooligomer of catalytic and regulatory chains.

It catalyses the reaction carbamoyl phosphate + L-aspartate = N-carbamoyl-L-aspartate + phosphate + H(+). The protein operates within pyrimidine metabolism; UMP biosynthesis via de novo pathway; (S)-dihydroorotate from bicarbonate: step 2/3. Its function is as follows. Catalyzes the condensation of carbamoyl phosphate and aspartate to form carbamoyl aspartate and inorganic phosphate, the committed step in the de novo pyrimidine nucleotide biosynthesis pathway. The polypeptide is Aspartate carbamoyltransferase catalytic subunit (Pyrobaculum islandicum (strain DSM 4184 / JCM 9189 / GEO3)).